Reading from the N-terminus, the 888-residue chain is Valine--tRNA ligase (888 aa).

The 'HIGH' region motif lies at 43–53 (PFTSGTLHLGH). The short motif at 534 to 538 (KMSKS) is the 'KMSKS' region element. Lys537 serves as a coordination point for ATP.

This sequence belongs to the class-I aminoacyl-tRNA synthetase family. ValS type 2 subfamily.

Its subcellular location is the cytoplasm. It catalyses the reaction tRNA(Val) + L-valine + ATP = L-valyl-tRNA(Val) + AMP + diphosphate. In terms of biological role, catalyzes the attachment of valine to tRNA(Val). As ValRS can inadvertently accommodate and process structurally similar amino acids such as threonine, to avoid such errors, it has a 'posttransfer' editing activity that hydrolyzes mischarged Thr-tRNA(Val) in a tRNA-dependent manner. The chain is Valine--tRNA ligase from Thermococcus kodakarensis (strain ATCC BAA-918 / JCM 12380 / KOD1) (Pyrococcus kodakaraensis (strain KOD1)).